Consider the following 162-residue polypeptide: MNSIRNFFKTFLLVELVKGLMVTGRYFFARKITVQFPEEKTPISPRFRGLHAQRRYANGEERCIACKLCEAVCPAMAISIESEQREDGTRRTSRYDIDLTKCIFCGFCEEACPVDAIVETHIFEYHGEKRGDLYYTKPMLLAIGDKYEAEIAANKAADAKYR.

4Fe-4S ferredoxin-type domains lie at 53–83 (QRRYANGEERCIACKLCEAVCPAMAISIESE) and 93–122 (SRYDIDLTKCIFCGFCEEACPVDAIVETHI). The [4Fe-4S] cluster site is built by C63, C66, C69, C73, C102, C105, C108, and C112.

It belongs to the complex I 23 kDa subunit family. As to quaternary structure, NDH-1 is composed of 14 different subunits. Subunits NuoA, H, J, K, L, M, N constitute the membrane sector of the complex. Requires [4Fe-4S] cluster as cofactor.

The protein localises to the cell inner membrane. It catalyses the reaction a quinone + NADH + 5 H(+)(in) = a quinol + NAD(+) + 4 H(+)(out). Its function is as follows. NDH-1 shuttles electrons from NADH, via FMN and iron-sulfur (Fe-S) centers, to quinones in the respiratory chain. The immediate electron acceptor for the enzyme in this species is believed to be ubiquinone. Couples the redox reaction to proton translocation (for every two electrons transferred, four hydrogen ions are translocated across the cytoplasmic membrane), and thus conserves the redox energy in a proton gradient. The chain is NADH-quinone oxidoreductase subunit I from Chromobacterium violaceum (strain ATCC 12472 / DSM 30191 / JCM 1249 / CCUG 213 / NBRC 12614 / NCIMB 9131 / NCTC 9757 / MK).